We begin with the raw amino-acid sequence, 357 residues long: Peptide chain release factor 1 (357 aa).

Glutamine 232 carries the N5-methylglutamine modification.

The protein belongs to the prokaryotic/mitochondrial release factor family. Post-translationally, methylated by PrmC. Methylation increases the termination efficiency of RF1.

The protein localises to the cytoplasm. Functionally, peptide chain release factor 1 directs the termination of translation in response to the peptide chain termination codons UAG and UAA. The protein is Peptide chain release factor 1 of Maridesulfovibrio salexigens (strain ATCC 14822 / DSM 2638 / NCIMB 8403 / VKM B-1763) (Desulfovibrio salexigens).